A 410-amino-acid chain; its full sequence is MRCAPTAGAALVLCAATAGLLSAQGRPAQPEPPRFASWDEMNLLAHGLLQLGHGLREHVERTRGQLGALERRMAACGNACQGPKGKDAPFKDSEDRVPEGQTPETLQSLQTQLKAQNSKIQQLFQKVAQQQRYLSKQNLRIQNLQSQIDLLAPTHLDNGVDKTSRGKRLPKMTQLIGLTPNATHLHRPPRDCQELFQEGERHSGLFQIQPLGSPPFLVNCEMTSDGGWTVIQRRLNGSVDFNQSWEAYKDGFGDPQGEFWLGLEKMHSITGNRGSQLAVQLQDWDGNAKLLQFPIHLGGEDTAYSLQLTEPTANELGATNVSPNGLSLPFSTWDQDHDLRGDLNCAKSLSGGWWFGTCSHSNLNGQYFHSIPRQRQERKKGIFWKTWKGRYYPLQATTLLIQPMEATAAS.

Residues 1–23 (MRCAPTAGAALVLCAATAGLLSA) form the signal peptide. The segment at 79-101 (ACQGPKGKDAPFKDSEDRVPEGQ) is disordered. A compositionally biased stretch (basic and acidic residues) spans 84–98 (KGKDAPFKDSEDRVP). Residues 104–152 (ETLQSLQTQLKAQNSKIQQLFQKVAQQQRYLSKQNLRIQNLQSQIDLLA) are a coiled coil. Asn181 carries N-linked (GlcNAc...) asparagine glycosylation. The Fibrinogen C-terminal domain occupies 183 to 405 (THLHRPPRDC…ATTLLIQPME (223 aa)). Residues Cys192 and Cys220 are joined by a disulfide bond. N-linked (GlcNAc...) asparagine glycosylation is found at Asn236 and Asn242. Cys345 and Cys358 are oxidised to a cystine.

As to quaternary structure, homooligomer; disulfide-linked via Cys residues in the N-terminal part of the protein. The homooligomer undergoes proteolytic processing to release the ANGPTL4 C-terminal chain, which circulates as a monomer. The homooligomer unprocessed form is able to interact with the extracellular matrix. N-glycosylated. In terms of processing, forms disulfide-linked dimers and tetramers. Post-translationally, cleaved into a smaller N-terminal chain and a larger chain that contains the fibrinogen C-terminal domain; both cleaved and uncleaved forms are detected in the extracellular space. The cleaved form is not present within the cell. As to expression, detected in liver and kidney. Predominantly expressed in adipose tissue and is strongly up-regulated by fasting in white adipose tissue and liver. More abundant in areas of lower flow stress in the inner curvature compared to the outer curvature regions of the aorta (at protein level).

The protein resides in the secreted. It is found in the extracellular space. It localises to the extracellular matrix. Its function is as follows. Mediates inactivation of the lipoprotein lipase LPL, and thereby plays a role in the regulation of triglyceride clearance from the blood serum and in lipid metabolism. May also play a role in regulating glucose homeostasis and insulin sensitivity. Inhibits proliferation, migration, and tubule formation of endothelial cells and reduces vascular leakage. Upon heterologous expression, inhibits the adhesion of endothelial cell to the extracellular matrix (ECM), and inhibits the reorganization of the actin cytoskeleton, formation of actin stress fibers and focal adhesions in endothelial cells that have adhered to ANGPTL4-containing ECM (in vitro). Depending on context, may modulate tumor-related angiogenesis. In terms of biological role, mediates inactivation of the lipoprotein lipase LPL, and thereby plays an important role in the regulation of triglyceride clearance from the blood serum and in lipid metabolism. Has higher activity in LPL inactivation than the uncleaved protein. The sequence is that of Angiopoietin-related protein 4 (Angptl4) from Mus musculus (Mouse).